We begin with the raw amino-acid sequence, 632 residues long: MEMWVLGEVGMAVLSAAAMADWVSYYRGDGPDEEEDGEQQEEEGPEAVADYRFSGRDSLIFLVDASKAMFEPYENEEAATPFDMTMQCIRNVYTSKIISSDKDLLSVVFYGMENNKNSADFKHIYVLQELDNPGAKRILELDQYRGDEGRVLFRETFGHNADYSLGEALWACSNLFSDVRVRLSHKRIMLFTNEDNPHANDSAKAKLARTRAGDLRDTGIILDLMHLKKPGGFDISLFYRDIINVAEDEDLGIQPDESGKLEHLMKKVRAKETRKRALSRLNLYLNKDLSFSVGVYNLIQKAYKPYPVKLYRETNEPVKTKTRVFNGKTGSLLLPSDTKRAQTYGNRQIAMEKEETEEVKRFDSPGLFLIGFKPLSMLKQHHHIRPSQFMYPEESLVTGSTTLFNALLMKCLEKEVMALCRYIARRNTPPRIVALIPQEEEVDEQKVQIAPPGFHIIFLPYADDKRNVDFTEKVPANREQVDKMKGIIQKLRFKYRTDSFENPVLQQHFRNLEALALDMLEPEQAEDLTMPKTEEMSRRLGNLVEEFKQLVYPPDYSPEGKAAKRKQAGDAQAEKRPKIEISEDSLRSYVQNGTLGKLTVSALKDTCRHYGLRSGGKKQELIDALTEYFSGR.

Catalysis depends on arginine 52, which acts as the Schiff-base intermediate with DNA; for 5'-deoxyribose-5-phosphate lyase activity. The Ku domain maps to leucine 283–lysine 490. The interval aspartate 555–lysine 578 is disordered. An SAP domain is found at leucine 595–phenylalanine 629.

Belongs to the ku70 family. In terms of assembly, heterodimer composed of XRCC5/Ku80 and XRCC6/Ku70. Component of the core long-range non-homologous end joining (NHEJ) complex (also named DNA-PK complex) composed of PRKDC, LIG4, XRCC4, XRCC6/Ku70, XRCC5/Ku86 and NHEJ1/XLF. Additional component of the NHEJ complex includes PAXX. Following autophosphorylation, PRKDC dissociates from DNA, leading to formation of the short-range NHEJ complex, composed of LIG4, XRCC4, XRCC6/Ku70, XRCC5/Ku86 and NHEJ1/XLF. Phosphorylated on serine residues.

The protein resides in the nucleus. The protein localises to the chromosome. In terms of biological role, single-stranded DNA-dependent ATP-dependent helicase that plays a key role in DNA non-homologous end joining (NHEJ) by recruiting DNA-PK to DNA. Required for double-strand break repair and V(D)J recombination. Also has a role in chromosome translocation. Has a role in chromosome translocation. The DNA helicase II complex binds preferentially to fork-like ends of double-stranded DNA in a cell cycle-dependent manner. It works in the 3'-5' direction. During NHEJ, the XRCC5-XRRC6 dimer performs the recognition step: it recognizes and binds to the broken ends of the DNA and protects them from further resection. Binding to DNA may be mediated by XRCC6. The XRCC5-XRRC6 dimer acts as a regulatory subunit of the DNA-dependent protein kinase complex DNA-PK by increasing the affinity of the catalytic subunit PRKDC to DNA by 100-fold. The XRCC5-XRRC6 dimer is probably involved in stabilizing broken DNA ends and bringing them together. The assembly of the DNA-PK complex to DNA ends is required for the NHEJ ligation step. Probably also acts as a 5'-deoxyribose-5-phosphate lyase (5'-dRP lyase), by catalyzing the beta-elimination of the 5' deoxyribose-5-phosphate at an abasic site near double-strand breaks. 5'-dRP lyase activity allows to 'clean' the termini of abasic sites, a class of nucleotide damage commonly associated with strand breaks, before such broken ends can be joined. The XRCC5-XRRC6 dimer together with APEX1 acts as a negative regulator of transcription. The sequence is that of X-ray repair cross-complementing protein 5 (XRCC6) from Gallus gallus (Chicken).